A 60-amino-acid polypeptide reads, in one-letter code: Acidic phospholipase A2 (60 aa).

Tyr-27, Gly-29, and Gly-31 together coordinate Ca(2+). Cys-28 and Cys-44 are disulfide-bonded. His-47 is a catalytic residue. Asp-48 is a Ca(2+) binding site.

The protein belongs to the phospholipase A2 family. Group II subfamily. D49 sub-subfamily. As to quaternary structure, monomer. It depends on Ca(2+) as a cofactor. As to expression, expressed by the venom gland.

Its subcellular location is the secreted. The enzyme catalyses a 1,2-diacyl-sn-glycero-3-phosphocholine + H2O = a 1-acyl-sn-glycero-3-phosphocholine + a fatty acid + H(+). In terms of biological role, snake venom phospholipase A2 (PLA2) that exhibits an indirect hemolytic activity, a low myotoxicity, and induces edema. In addition, this enzyme has been shown to induce the release of some pro- and anti-inflammatory cytokines from human PBMC (IL12B, TNF-alpha, IL1B and IL6 but not variation has been observed for IL-8 and IL-10). PLA2 catalyzes the calcium-dependent hydrolysis of the 2-acyl groups in 3-sn-phosphoglycerides. The chain is Acidic phospholipase A2 from Bothrops leucurus (Whitetail lancehead).